Consider the following 456-residue polypeptide: RuvB-like 1 (456 aa).

Lys2 is covalently cross-linked (Glycyl lysine isopeptide (Lys-Gly) (interchain with G-Cter in SUMO2)). ATP is bound at residue 70 to 77 (GPPGTGKT). Lys225 participates in a covalent cross-link: Glycyl lysine isopeptide (Lys-Gly) (interchain with G-Cter in SUMO1); alternate. A Glycyl lysine isopeptide (Lys-Gly) (interchain with G-Cter in SUMO2); alternate cross-link involves residue Lys225. Lys445 participates in a covalent cross-link: Glycyl lysine isopeptide (Lys-Gly) (interchain with G-Cter in SUMO2). Lys453 is subject to N6-acetyllysine.

This sequence belongs to the RuvB family. As to quaternary structure, forms homohexameric rings. Can form a dodecamer with RUVBL2 made of two stacked hexameric rings; however, even though RUVBL1 and RUVBL2 are present in equimolar ratio, the oligomeric status of each hexamer is not known. Oligomerization may regulate binding to nucleic acids and conversely, binding to nucleic acids may affect the dodecameric assembly. Interaction of the complex with DHX34 results in conformational changes of the N-terminus of the RUVBL2 subunits, resulting in loss of nucleotide binding ability and ATP hydrolysis of the complex. Interacts with the transcriptional activation domain of MYC. Component of the RNA polymerase II holoenzyme complex. May also act to bridge the LEF1/TCF1-CTNNB1 complex and TBP. Component of the NuA4 histone acetyltransferase complex which contains the catalytic subunit KAT5/TIP60 and the subunits EP400, TRRAP/PAF400, BRD8/SMAP, EPC1, DMAP1/DNMAP1, RUVBL1/TIP49, RUVBL2, ING3, actin, ACTL6A/BAF53A, MORF4L1/MRG15, MORF4L2/MRGX, MRGBP, YEATS4/GAS41, VPS72/YL1 and MEAF6. The NuA4 complex interacts with MYC and the adenovirus E1A protein. RUVBL1 interacts with EP400. Component of a NuA4-related complex which contains EP400, TRRAP/PAF400, SRCAP, BRD8/SMAP, EPC1, DMAP1/DNMAP1, RUVBL1/TIP49, RUVBL2, actin, ACTL6A/BAF53A, VPS72 and YEATS4/GAS41. Component of the BAF53 complex, at least composed of ACTL6A/BAF53A, RUVBL1/TIP49, SMARCA2/BRM, and TRRAP/PAF400. Component of some MLL1/MLL complex, at least composed of the core components KMT2A/MLL1, ASH2L, HCFC1/HCF1, WDR5 and RBBP5, as well as the facultative components BACC1, CHD8, E2F6, HSP70, INO80C, KANSL1, LAS1L, MAX, MCRS1, MGA, MYST1/MOF, PELP1, PHF20, PRP31, RING2, RUVB1/TIP49A, RUVB2/TIP49B, SENP3, TAF1, TAF4, TAF6, TAF7, TAF9 and TEX10. Associates with alpha and gamma tubulins, particularly during metaphase and early anaphase. Interacts with NPAT. Component of the chromatin-remodeling INO80 complex; specifically part of a complex module associated with the helicase ATP-binding and the helicase C-terminal domain of INO80. Interacts with IGHMBP2. Interacts with OFD1. Interacts with HINT1. Component of a complex with USP49 and PSMC5. Component of a SWR1-like complex. Component of the R2TP complex composed at least of RUVBL1, RUVBL2, RPAP3 and PIHD1. Component of the PAQosome complex which is responsible for the biogenesis of several protein complexes and which consists of R2TP complex members RUVBL1, RUVBL2, RPAP3 and PIH1D1, URI complex members PFDN2, PFDN6, PDRG1, UXT and URI1 as well as ASDURF, POLR2E and DNAAF10/WDR92. Interacts with PIH1D1. Interacts with ITFG1. Interacts with WAC; WAC positively regulates MTOR activity by promoting the assembly of the TTT complex composed of TELO2, TTI1 and TTI2 and the RUVBL complex composed of RUVBL1 and RUVBL2 into the TTT-RUVBL complex which leads to the dimerization of the mTORC1 complex and its subsequent activation. The RUVBL1/RUVBL2 complex interacts with ZNHIT1 (via HIT-type zinc finger), ZNHIT3 (via HIT-type zinc finger), ZNHIT6 (via HIT-type zinc finger) and DDX59/ZNHIT5 (via HIT-type zinc finger) in the presence of ADP. Interacts with NOPCHAP1; the interaction is direct and disrupted upon ATP binding. Interacts with SMG1. Interacts with NOP2, NOP56 and NUFIP1.

The protein localises to the nucleus matrix. The protein resides in the nucleus. Its subcellular location is the nucleoplasm. It is found in the cytoplasm. It localises to the membrane. The protein localises to the cytoskeleton. The protein resides in the microtubule organizing center. Its subcellular location is the centrosome. It is found in the dynein axonemal particle. It catalyses the reaction ATP + H2O = ADP + phosphate + H(+). In terms of biological role, possesses single-stranded DNA-stimulated ATPase and ATP-dependent DNA helicase (3' to 5') activity; hexamerization is thought to be critical for ATP hydrolysis and adjacent subunits in the ring-like structure contribute to the ATPase activity. Component of the NuA4 histone acetyltransferase complex which is involved in transcriptional activation of select genes principally by acetylation of nucleosomal histones H4 and H2A. This modification may both alter nucleosome-DNA interactions and promote interaction of the modified histones with other proteins which positively regulate transcription. This complex may be required for the activation of transcriptional programs associated with oncogene and proto-oncogene mediated growth induction, tumor suppressor mediated growth arrest and replicative senescence, apoptosis, and DNA repair. The NuA4 complex ATPase and helicase activities seem to be, at least in part, contributed by the association of RUVBL1 and RUVBL2 with EP400. NuA4 may also play a direct role in DNA repair when recruited to sites of DNA damage. Component of a SWR1-like complex that specifically mediates the removal of histone H2A.Z/H2AZ1 from the nucleosome. Proposed core component of the chromatin remodeling INO80 complex which exhibits DNA- and nucleosome-activated ATPase activity and catalyzes ATP-dependent nucleosome sliding. Plays an essential role in oncogenic transformation by MYC and also modulates transcriptional activation by the LEF1/TCF1-CTNNB1 complex. Essential for cell proliferation. May be able to bind plasminogen at cell surface and enhance plasminogen activation. This is RuvB-like 1 (Ruvbl1) from Mus musculus (Mouse).